Reading from the N-terminus, the 83-residue chain is Large ribosomal subunit protein bL31B (83 aa).

This sequence belongs to the bacterial ribosomal protein bL31 family. Type B subfamily. As to quaternary structure, part of the 50S ribosomal subunit.

The chain is Large ribosomal subunit protein bL31B from Bacteroides fragilis (strain ATCC 25285 / DSM 2151 / CCUG 4856 / JCM 11019 / LMG 10263 / NCTC 9343 / Onslow / VPI 2553 / EN-2).